Consider the following 844-residue polypeptide: Beta-mannosidase B (844 aa).

The active-site Proton donor is Glu432.

The protein belongs to the glycosyl hydrolase 2 family. Beta-mannosidase B subfamily.

The catalysed reaction is Hydrolysis of terminal, non-reducing beta-D-mannose residues in beta-D-mannosides.. It functions in the pathway glycan metabolism; N-glycan degradation. Its function is as follows. Exoglycosidase that cleaves the single beta-linked mannose residue from the non-reducing end of beta-mannosidic oligosaccharides of various complexity and length. Prefers mannobiose over mannotriose and has no activity against polymeric mannan. Is also severely restricted by galactosyl substitutions at the +1 subsite. The polypeptide is Beta-mannosidase B (mndB) (Aspergillus oryzae (strain ATCC 42149 / RIB 40) (Yellow koji mold)).